A 57-amino-acid polypeptide reads, in one-letter code: uncharacterized protein (57 aa).

Its subcellular location is the plastid. This is an uncharacterized protein from Euglena longa (Euglenophycean alga).